The following is a 78-amino-acid chain: Teretoxin Tsu6.15 (78 aa).

A signal peptide spans 1–21 (MATSGRLLCFCLVLGLVFESL). Positions 22 to 47 (GYSEARPPRDRKRTVTAKRYDPLAQR) are excised as a propeptide.

The protein belongs to the teretoxin M (TM) superfamily. Post-translationally, contains 3 disulfide bonds. In terms of tissue distribution, expressed by the venom duct.

The protein localises to the secreted. In Terebra subulata (Chocolate spotted auger), this protein is Teretoxin Tsu6.15.